The chain runs to 431 residues: 23S rRNA (uracil(1939)-C(5))-methyltransferase RlmD (431 aa).

One can recognise a TRAM domain in the interval 10–68 (RVTTRQIITVKVNDLDSFGQGVARHNGKALFIPGLLPEESAEVIITEDKKQFARARVSR). Cys-81, Cys-87, Cys-90, and Cys-161 together coordinate [4Fe-4S] cluster. 6 residues coordinate S-adenosyl-L-methionine: Gln-264, Phe-293, Asn-298, Glu-314, Asn-341, and Asp-362. Catalysis depends on Cys-388, which acts as the Nucleophile.

The protein belongs to the class I-like SAM-binding methyltransferase superfamily. RNA M5U methyltransferase family. RlmD subfamily.

The catalysed reaction is uridine(1939) in 23S rRNA + S-adenosyl-L-methionine = 5-methyluridine(1939) in 23S rRNA + S-adenosyl-L-homocysteine + H(+). Its function is as follows. Catalyzes the formation of 5-methyl-uridine at position 1939 (m5U1939) in 23S rRNA. In Salmonella typhi, this protein is 23S rRNA (uracil(1939)-C(5))-methyltransferase RlmD.